The following is a 182-amino-acid chain: Protein Syd (182 aa).

Belongs to the Syd family.

It localises to the cell inner membrane. In terms of biological role, interacts with the SecY protein in vivo. May bind preferentially to an uncomplexed state of SecY, thus functioning either as a chelating agent for excess SecY in the cell or as a regulatory factor that negatively controls the translocase function. The protein is Protein Syd of Pectobacterium carotovorum subsp. carotovorum (strain PC1).